Here is a 75-residue protein sequence, read N- to C-terminus: UPF0352 protein YejL (75 aa).

The protein belongs to the UPF0352 family.

The chain is UPF0352 protein YejL from Shigella dysenteriae serotype 1 (strain Sd197).